A 741-amino-acid chain; its full sequence is Exostosin-1b (741 aa).

The Cytoplasmic portion of the chain corresponds to 1 to 7 (MQAKKRY). Residues 8-28 (LISLLTGAFLVLLIYLGGGGV) form a helical; Signal-anchor for type II membrane protein membrane-spanning segment. The Lumenal portion of the chain corresponds to 29–741 (PGPAAPGSRS…RKKYREIERL (713 aa)). 2 N-linked (GlcNAc...) asparagine glycosylation sites follow: N84 and N325. Residues R435, R544, D560, E561, D562, E648, D649, and R696 each coordinate UDP-N-acetyl-alpha-D-glucosamine. D562 provides a ligand contact to Mn(2+). Cysteines 647 and 699 form a disulfide. D649 is an active-site residue.

It belongs to the glycosyltransferase 47 family. Mn(2+) is required as a cofactor.

The protein resides in the endoplasmic reticulum membrane. It catalyses the reaction 3-O-{[(1-&gt;4)-beta-D-GlcA-(1-&gt;4)-alpha-D-GlcNAc](n)-(1-&gt;4)-beta-D-GlcA-(1-&gt;3)-beta-D-Gal-(1-&gt;3)-beta-D-Gal-(1-&gt;4)-beta-D-Xyl}-L-seryl-[protein] + UDP-N-acetyl-alpha-D-glucosamine = 3-O-{alpha-D-GlcNAc-[(1-&gt;4)-beta-D-GlcA-(1-&gt;4)-alpha-D-GlcNAc](n)-(1-&gt;4)-beta-D-GlcA-(1-&gt;3)-beta-D-Gal-(1-&gt;3)-beta-D-Gal-(1-&gt;4)-beta-D-Xyl}-L-seryl-[protein] + UDP + H(+). It carries out the reaction 3-O-{alpha-D-GlcNAc-[(1-&gt;4)-beta-D-GlcA-(1-&gt;4)-alpha-D-GlcNAc](n)-(1-&gt;4)-beta-D-GlcA-(1-&gt;3)-beta-D-Gal-(1-&gt;3)-beta-D-Gal-(1-&gt;4)-beta-D-Xyl}-L-seryl-[protein] + UDP-alpha-D-glucuronate = 3-O-{[(1-&gt;4)-beta-D-GlcA-(1-&gt;4)-alpha-D-GlcNAc](n+1)-(1-&gt;4)-beta-D-GlcA-(1-&gt;3)-beta-D-Gal-(1-&gt;3)-beta-D-Gal-(1-&gt;4)-beta-D-Xyl}-L-seryl-[protein] + UDP + H(+). It participates in protein modification; protein glycosylation. In terms of biological role, glycosyltransferase required for the biosynthesis of heparan-sulfate. The chain is Exostosin-1b (ext1b) from Danio rerio (Zebrafish).